Reading from the N-terminus, the 366-residue chain is Cobalt-precorrin-5B C(1)-methyltransferase (366 aa).

The protein belongs to the CbiD family.

It carries out the reaction Co-precorrin-5B + S-adenosyl-L-methionine = Co-precorrin-6A + S-adenosyl-L-homocysteine. The protein operates within cofactor biosynthesis; adenosylcobalamin biosynthesis; cob(II)yrinate a,c-diamide from sirohydrochlorin (anaerobic route): step 6/10. Catalyzes the methylation of C-1 in cobalt-precorrin-5B to form cobalt-precorrin-6A. The sequence is that of Cobalt-precorrin-5B C(1)-methyltransferase from Hahella chejuensis (strain KCTC 2396).